Here is a 673-residue protein sequence, read N- to C-terminus: Auxin response factor 9 (673 aa).

The segment at residues 126–228 (FCKTLTASDT…ELRVGVRRLM (103 aa)) is a DNA-binding region (TF-B3). 2 disordered regions span residues 356 to 386 (ELEPLDASNPQPPQPPLRNKRARPPASPSVV) and 514 to 545 (DSDQISQPSNGNKSDAPGTSSERSPLESQSRQ). A compositionally biased stretch (polar residues) spans 516–545 (DQISQPSNGNKSDAPGTSSERSPLESQSRQ). Positions 547 to 639 (RSCTKVIMQG…EEAKLLAPKS (93 aa)) constitute a PB1 domain.

It belongs to the ARF family. Homodimers and heterodimers. In terms of tissue distribution, expressed in roots, culms, leaves and young panicles.

The protein localises to the nucleus. Functionally, auxin response factors (ARFs) are transcriptional factors that bind specifically to the DNA sequence 5'-TGTCTC-3' found in the auxin-responsive promoter elements (AuxREs). In Oryza sativa subsp. japonica (Rice), this protein is Auxin response factor 9 (ARF9).